The primary structure comprises 356 residues: Mannonate dehydratase (356 aa).

Belongs to the mannonate dehydratase family. Requires Fe(2+) as cofactor. Mn(2+) is required as a cofactor.

The catalysed reaction is D-mannonate = 2-dehydro-3-deoxy-D-gluconate + H2O. Its pathway is carbohydrate metabolism; pentose and glucuronate interconversion. Functionally, catalyzes the dehydration of D-mannonate. The sequence is that of Mannonate dehydratase from Levilactobacillus brevis (strain ATCC 367 / BCRC 12310 / CIP 105137 / JCM 1170 / LMG 11437 / NCIMB 947 / NCTC 947) (Lactobacillus brevis).